A 288-amino-acid polypeptide reads, in one-letter code: Pyridoxal kinase PdxY (288 aa).

Substrate contacts are provided by residues Ser-9 and 44 to 45; that span reads TQ. Residues Asp-111, Glu-148, and Lys-181 each coordinate ATP. Substrate is bound at residue Asp-224.

The protein belongs to the pyridoxine kinase family. PdxY subfamily. Homodimer. Mg(2+) is required as a cofactor.

The catalysed reaction is pyridoxal + ATP = pyridoxal 5'-phosphate + ADP + H(+). The protein operates within cofactor metabolism; pyridoxal 5'-phosphate salvage; pyridoxal 5'-phosphate from pyridoxal: step 1/1. Functionally, pyridoxal kinase involved in the salvage pathway of pyridoxal 5'-phosphate (PLP). Catalyzes the phosphorylation of pyridoxal to PLP. This Haemophilus influenzae (strain ATCC 51907 / DSM 11121 / KW20 / Rd) protein is Pyridoxal kinase PdxY.